The following is a 477-amino-acid chain: E3 ubiquitin-protein ligase TRIM17 (477 aa).

The segment at 16–66 adopts an RING-type zinc-finger fold; it reads CSICLDYFTDPVMTACGHNFCRECIQMSWEKGKVKKGKKKQKGSFPCPECR. Residues 94-135 form a B box-type zinc finger; it reads QKRDLCQAHQEPLKLFCQDDQSPICVVCREAQEHRMHRVLPL. Residues cysteine 99, histidine 102, cysteine 121, and histidine 127 each contribute to the Zn(2+) site. The stretch at 135-226 forms a coiled coil; sequence LDEAAREYKL…KLQDSKASLD (92 aa). The B30.2/SPRY domain maps to 276–475; that stretch reads AIKTLCRVPG…MVISTVTMWV (200 aa).

It belongs to the TRIM/RBCC family. Interacts (via coiled coil) with TRIM44 (via coiled coil). Interacts with TRIM28; this interaction prevents TRIM28 activity on BCL2A1. Interacts with TRIM41; this interaction prevents TRIM41 activity on ZSCAN2. Interacts with BECN1. Interacts with NFATC3 and NFATC4; these interactions prevent NFATC3 and NFATC4 nuclear localization. Auto-ubiquitinated. In terms of tissue distribution, almost exclusively in the testis.

The protein resides in the cytoplasm. The protein localises to the lysosome. It catalyses the reaction S-ubiquitinyl-[E2 ubiquitin-conjugating enzyme]-L-cysteine + [acceptor protein]-L-lysine = [E2 ubiquitin-conjugating enzyme]-L-cysteine + N(6)-ubiquitinyl-[acceptor protein]-L-lysine.. The protein operates within protein modification; protein ubiquitination. In terms of biological role, E3 ubiquitin ligase that plays important roles in the regulation of neuronal apoptosis, selective autophagy or cell proliferation. Stimulates the degradation of kinetochore ZW10 interacting protein ZWINT in a proteasome-dependent manner, leading to negative regulation of cell proliferation. Inhibits autophagic degradation of diverse known targets while contributing to autophagy of midbodies. Autophagy-inhibitory activity involves MCL1, which TRIM17 assembles into complexes with the key autophagy regulator BECN1. Controls neuronal apoptosis by mediating ubiquitination and degradation of MCL1 to initiate neuronal death. In addition, regulates NFAT transcription factors NFATC3 and NFATC4 activities by preventing their nuclear localization, thus inhibiting their transcriptional activities. Decreases TRIM41-mediated degradation of ZSCAN2 thereby stimulating alpha-synuclein/SNCA transcription in neuronal cells. Prevents the E3 ubiquitin-ligase activity of TRIM28 and its interaction with anti-apoptotic BCL2A1, blocking TRIM28 from ubiquitinating BCL2A1. The chain is E3 ubiquitin-protein ligase TRIM17 (Trim17) from Mus musculus (Mouse).